The chain runs to 60 residues: Single-pass membrane and coiled-coil domain-containing protein 4 homolog (60 aa).

Residues 1 to 22 are disordered; it reads MRKLRGGQTRETRKQKQERREE. Over residues 8 to 22 the composition is skewed to basic and acidic residues; that stretch reads QTRETRKQKQERREE. The stretch at 8–34 forms a coiled coil; it reads QTRETRKQKQERREENQKIQQQLKTIV. The helical transmembrane segment at 30 to 50 threads the bilayer; that stretch reads LKTIVLPICGVVFLCIVAYVF.

This sequence belongs to the SMCO4 family.

The protein resides in the membrane. The sequence is that of Single-pass membrane and coiled-coil domain-containing protein 4 homolog from Culex quinquefasciatus (Southern house mosquito).